The following is a 296-amino-acid chain: 4-amino-4-deoxyprephenate dehydrogenase (296 aa).

Positions 9 to 288 constitute a Prephenate/arogenate dehydrogenase domain; it reads RCVVVGGAGA…EHGAELERLC (280 aa).

Belongs to the prephenate/arogenate dehydrogenase family.

The catalysed reaction is 4-amino-4-deoxyprephenate + NAD(+) = 3-(4-aminophenyl)pyruvate + CO2 + NADH + H(+). It participates in antibiotic biosynthesis. In terms of biological role, involved in pristinamycin I biosynthesis. Probably catalyzes the formation of 3-(4-aminophenyl)pyruvate from 4-amino-4-deoxyprephenate. The polypeptide is 4-amino-4-deoxyprephenate dehydrogenase (Streptomyces pristinaespiralis).